Reading from the N-terminus, the 240-residue chain is Probable phosphatase Athe_0620 (240 aa).

His8, His10, His16, His41, Glu74, His102, His132, Asp192, and His194 together coordinate Zn(2+).

It belongs to the PHP family. Zn(2+) is required as a cofactor.

The sequence is that of Probable phosphatase Athe_0620 from Caldicellulosiruptor bescii (strain ATCC BAA-1888 / DSM 6725 / KCTC 15123 / Z-1320) (Anaerocellum thermophilum).